Consider the following 204-residue polypeptide: FMN-dependent NADH:quinone oxidoreductase (204 aa).

Residues Ser10, 16 to 18, and 96 to 99 each bind FMN; these read SIS and MYNF.

It belongs to the azoreductase type 1 family. In terms of assembly, homodimer. Requires FMN as cofactor.

The enzyme catalyses 2 a quinone + NADH + H(+) = 2 a 1,4-benzosemiquinone + NAD(+). The catalysed reaction is N,N-dimethyl-1,4-phenylenediamine + anthranilate + 2 NAD(+) = 2-(4-dimethylaminophenyl)diazenylbenzoate + 2 NADH + 2 H(+). Functionally, quinone reductase that provides resistance to thiol-specific stress caused by electrophilic quinones. In terms of biological role, also exhibits azoreductase activity. Catalyzes the reductive cleavage of the azo bond in aromatic azo compounds to the corresponding amines. The sequence is that of FMN-dependent NADH:quinone oxidoreductase from Herminiimonas arsenicoxydans.